The sequence spans 643 residues: Phosphomethylpyrimidine synthase (643 aa).

Residues Asn-248, Met-277, Tyr-306, His-342, 362–364 (SRG), 403–406 (DGLR), and Glu-442 each bind substrate. His-446 is a binding site for Zn(2+). Tyr-469 is a binding site for substrate. His-510 is a Zn(2+) binding site. Positions 590, 593, and 598 each coordinate [4Fe-4S] cluster.

The protein belongs to the ThiC family. In terms of assembly, homodimer. Requires [4Fe-4S] cluster as cofactor.

The enzyme catalyses 5-amino-1-(5-phospho-beta-D-ribosyl)imidazole + S-adenosyl-L-methionine = 4-amino-2-methyl-5-(phosphooxymethyl)pyrimidine + CO + 5'-deoxyadenosine + formate + L-methionine + 3 H(+). Its pathway is cofactor biosynthesis; thiamine diphosphate biosynthesis. In terms of biological role, catalyzes the synthesis of the hydroxymethylpyrimidine phosphate (HMP-P) moiety of thiamine from aminoimidazole ribotide (AIR) in a radical S-adenosyl-L-methionine (SAM)-dependent reaction. The chain is Phosphomethylpyrimidine synthase from Burkholderia cenocepacia (strain HI2424).